A 204-amino-acid polypeptide reads, in one-letter code: Somatotropin (204 aa).

An N-terminal signal peptide occupies residues 1–17 (MDRVVLMLSVLSLGVSS). At glutamine 18 the chain carries Pyrrolidone carboxylic acid. Residue histidine 36 participates in Zn(2+) binding. Cysteines 69 and 177 form a disulfide. Glutamate 186 contributes to the Zn(2+) binding site. The cysteines at positions 194 and 202 are disulfide-linked.

It belongs to the somatotropin/prolactin family.

It is found in the secreted. Functionally, growth hormone plays an important role in growth control and is involved in the regulation of several anabolic processes. Implicated as an osmoregulatory substance important for seawater adaptation. In Acanthopagrus butcheri (Australian black bream), this protein is Somatotropin (gh).